We begin with the raw amino-acid sequence, 640 residues long: Chaperone protein DnaK (640 aa).

The residue at position 199 (Thr199) is a Phosphothreonine; by autocatalysis. Residues 603 to 640 (YAAGETESSAAEPGEPQEKTVDAEVVDAEFEEVKDDKK) are disordered. Residues 626–640 (EVVDAEFEEVKDDKK) show a composition bias toward acidic residues.

The protein belongs to the heat shock protein 70 family.

In terms of biological role, acts as a chaperone. This chain is Chaperone protein DnaK, found in Methylobacillus flagellatus (strain ATCC 51484 / DSM 6875 / VKM B-1610 / KT).